The primary structure comprises 126 residues: Large ribosomal subunit protein bL12 (126 aa).

It belongs to the bacterial ribosomal protein bL12 family. Homodimer. Part of the ribosomal stalk of the 50S ribosomal subunit. Forms a multimeric L10(L12)X complex, where L10 forms an elongated spine to which 2 to 4 L12 dimers bind in a sequential fashion. Binds GTP-bound translation factors.

Its function is as follows. Forms part of the ribosomal stalk which helps the ribosome interact with GTP-bound translation factors. Is thus essential for accurate translation. This is Large ribosomal subunit protein bL12 from Chlorobaculum parvum (strain DSM 263 / NCIMB 8327) (Chlorobium vibrioforme subsp. thiosulfatophilum).